We begin with the raw amino-acid sequence, 462 residues long: A-type ATP synthase subunit B (462 aa).

This sequence belongs to the ATPase alpha/beta chains family. Has multiple subunits with at least A(3), B(3), C, D, E, F, H, I and proteolipid K(x).

Its subcellular location is the cell membrane. In terms of biological role, component of the A-type ATP synthase that produces ATP from ADP in the presence of a proton gradient across the membrane. The B chain is a regulatory subunit. The sequence is that of A-type ATP synthase subunit B from Cenarchaeum symbiosum (strain A).